We begin with the raw amino-acid sequence, 452 residues long: UDP-N-acetylmuramoyl-tripeptide--D-alanyl-D-alanine ligase (452 aa).

113 to 119 (GSNGKTT) is an ATP binding site.

Belongs to the MurCDEF family. MurF subfamily.

The protein localises to the cytoplasm. The enzyme catalyses UDP-N-acetyl-alpha-D-muramoyl-L-alanyl-gamma-D-glutamyl-L-lysine + D-alanyl-D-alanine + ATP = UDP-N-acetyl-alpha-D-muramoyl-L-alanyl-gamma-D-glutamyl-L-lysyl-D-alanyl-D-alanine + ADP + phosphate + H(+). The protein operates within cell wall biogenesis; peptidoglycan biosynthesis. Functionally, involved in cell wall formation. Catalyzes the final step in the synthesis of UDP-N-acetylmuramoyl-pentapeptide, the precursor of murein. Catalyzes the addition of D-alanyl-D-alanine to UDP-MurNAc-L-alanyl-gamma-D-glutamyl-L-lysine. In vitro, can also use the mesodiaminopimelic acid-containing form of UDP-MurNAc-tripeptide, with the same efficiency, revealing that the discrimination for the amino acid residue at the third position of the peptide in the peptidoglycans is entirely supported by MurE. The chain is UDP-N-acetylmuramoyl-tripeptide--D-alanyl-D-alanine ligase from Staphylococcus aureus (strain NCTC 8325 / PS 47).